The sequence spans 305 residues: MSRLRAPVAKFLADGLKGIRSTALAGSRLSNCRYTSTSSKDTDTSSHMTHFGFKDVPEDEKEHLVKNVFSSVAKKYDEMNDAMSLGIHRLWKNIFVSRLNPGNSTVPMKILDVAGGTGDIAFRILNHATNHNGDRNTRVIVADINPDMLSVGLRRSKKTPYYDSGRVEFIEQNAEILDKIPDNSIDMYTIAFGIRNCTHIPKVLEQAYRVLKPGGVFSCLEFSKVYPAPLAELYRQYSFKILPLLGTIIAGDSQSYEYLVESIERFPDAKTFAKMIEDAGFTLAGETGYETLSFGIAAIHTGIKL.

A mitochondrion-targeting transit peptide spans 1 to 34 (MSRLRAPVAKFLADGLKGIRSTALAGSRLSNCRY). Residues threonine 117, aspartate 143, and 173–174 (NA) each bind S-adenosyl-L-methionine.

The protein belongs to the class I-like SAM-binding methyltransferase superfamily. MenG/UbiE family. As to quaternary structure, component of a multi-subunit COQ enzyme complex, composed of at least COQ3, COQ4, COQ5, COQ6, COQ7 and COQ9.

Its subcellular location is the mitochondrion inner membrane. It carries out the reaction 2-methoxy-6-(all-trans-decaprenyl)benzene-1,4-diol + S-adenosyl-L-methionine = 5-methoxy-2-methyl-3-(all-trans-decaprenyl)benzene-1,4-diol + S-adenosyl-L-homocysteine + H(+). The protein operates within cofactor biosynthesis; ubiquinone biosynthesis. In terms of biological role, methyltransferase required for the conversion of 2-decaprenyl-6-methoxy-1,4-benzoquinol (DDMQH2) to 2-decaprenyl-3-methyl-6-methoxy-1,4-benzoquinol (DMQH2). The polypeptide is 2-methoxy-6-polyprenyl-1,4-benzoquinol methylase, mitochondrial (Schizosaccharomyces pombe (strain 972 / ATCC 24843) (Fission yeast)).